The following is a 272-amino-acid chain: 2-succinyl-6-hydroxy-2,4-cyclohexadiene-1-carboxylate synthase (272 aa).

Belongs to the AB hydrolase superfamily. MenH family. Monomer.

The catalysed reaction is 5-enolpyruvoyl-6-hydroxy-2-succinyl-cyclohex-3-ene-1-carboxylate = (1R,6R)-6-hydroxy-2-succinyl-cyclohexa-2,4-diene-1-carboxylate + pyruvate. The protein operates within quinol/quinone metabolism; 1,4-dihydroxy-2-naphthoate biosynthesis; 1,4-dihydroxy-2-naphthoate from chorismate: step 3/7. It participates in quinol/quinone metabolism; menaquinone biosynthesis. In terms of biological role, catalyzes a proton abstraction reaction that results in 2,5-elimination of pyruvate from 2-succinyl-5-enolpyruvyl-6-hydroxy-3-cyclohexene-1-carboxylate (SEPHCHC) and the formation of 2-succinyl-6-hydroxy-2,4-cyclohexadiene-1-carboxylate (SHCHC). This chain is 2-succinyl-6-hydroxy-2,4-cyclohexadiene-1-carboxylate synthase, found in Yersinia pestis (strain Pestoides F).